Consider the following 72-residue polypeptide: Beta-defensin 104A (72 aa).

An N-terminal signal peptide occupies residues 1–22 (MRRLVLLLAISLLLYQDLPVRS). Disulfide bonds link Cys30/Cys57, Cys37/Cys51, and Cys41/Cys58.

The protein belongs to the beta-defensin family.

Its subcellular location is the secreted. Its function is as follows. Has antimicrobial activity. This chain is Beta-defensin 104A (DEFB104A), found in Gorilla gorilla gorilla (Western lowland gorilla).